Reading from the N-terminus, the 145-residue chain is Basic phospholipase A2 PC17 (145 aa).

An N-terminal signal peptide occupies residues 1–21; that stretch reads MYPAHLLVLLAVCVSLLGASA. The propeptide occupies 22 to 27; that stretch reads ISNQPR. 7 cysteine pairs are disulfide-bonded: C38/C98, C54/C144, C56/C72, C71/C125, C78/C118, C87/C111, and C105/C116. Ca(2+) contacts are provided by Y55, G57, and G59. Residue H75 is part of the active site. D76 is a binding site for Ca(2+). The active site involves D119.

Belongs to the phospholipase A2 family. Group I subfamily. D49 sub-subfamily. It depends on Ca(2+) as a cofactor. As to expression, expressed by the venom gland.

The protein localises to the secreted. It carries out the reaction a 1,2-diacyl-sn-glycero-3-phosphocholine + H2O = a 1-acyl-sn-glycero-3-phosphocholine + a fatty acid + H(+). In terms of biological role, snake venom phospholipase A2 (PLA2) that inhibits neuromuscular transmission by blocking acetylcholine release from the nerve termini. PLA2 catalyzes the calcium-dependent hydrolysis of the 2-acyl groups in 3-sn-phosphoglycerides. The polypeptide is Basic phospholipase A2 PC17 (Laticauda colubrina (Yellow-lipped sea krait)).